We begin with the raw amino-acid sequence, 221 residues long: Ribosomal RNA small subunit methyltransferase Nep1 (221 aa).

S-adenosyl-L-methionine-binding positions include Gly-174, Gly-179, and 196–201 (IGNVSL).

The protein belongs to the class IV-like SAM-binding methyltransferase superfamily. RNA methyltransferase NEP1 family. Homodimer.

The enzyme catalyses a pseudouridine in rRNA + S-adenosyl-L-methionine = an N(1)-methylpseudouridine in rRNA + S-adenosyl-L-homocysteine + H(+). In terms of biological role, methyltransferase involved in ribosomal biogenesis. Specifically catalyzes the N1-methylation of the pseudouridine corresponding to position 914 in M.jannaschii 16S rRNA. The polypeptide is Ribosomal RNA small subunit methyltransferase Nep1 (Pyrobaculum calidifontis (strain DSM 21063 / JCM 11548 / VA1)).